Here is a 469-residue protein sequence, read N- to C-terminus: Protein HEAT STRESS TOLERANT DWD 1 (469 aa).

Residues 1–15 (MGRNVKTKAKRKNKK) show a composition bias toward basic residues. 2 disordered regions span residues 1–29 (MGRNVKTKAKRKNKKKAEASSSEIPSIPT) and 115–150 (DVVPKTFGNGEDEDEDDEDDSDSDDDDGDEASKTPN). Acidic residues predominate over residues 124 to 143 (GEDEDEDDEDDSDSDDDDGD). WD repeat units follow at residues 157–197 (AHHG…NALA), 221–261 (GHKD…WAVD), 267–307 (GHTA…SPAL), 311–351 (AHNA…GGDA), 358–398 (YHKH…DEEE), and 425–464 (QGQKDLKELHWHNQIPGMIISTAGDGFNILMPYNIQNTLP).

The protein belongs to the WD repeat RBAP46/RBAP48/MSI1 family. In terms of assembly, probable component of CULLIN4 (CUL4) RING ligase (CRL4) complexes. Interacts with DDB1A and DDB1B. Associates with HSP90-1.

It participates in protein modification; protein ubiquitination. Its function is as follows. Probable substrate receptor of CRL4 E3 ligase complexes acting as negative regulators of thermotolerance by disturbing the action of HSP90-1 and by preventing the expression of heat-inducible genes (e.g. HSP14.7, HSP21, At2g03020 and WRKY28). This Arabidopsis thaliana (Mouse-ear cress) protein is Protein HEAT STRESS TOLERANT DWD 1.